The chain runs to 113 residues: Large ribosomal subunit protein bL17 (113 aa).

The protein belongs to the bacterial ribosomal protein bL17 family. Part of the 50S ribosomal subunit. Contacts protein L32.

This chain is Large ribosomal subunit protein bL17, found in Syntrophomonas wolfei subsp. wolfei (strain DSM 2245B / Goettingen).